A 520-amino-acid chain; its full sequence is Protein EARLY FLOWERING 5 (520 aa).

3 consecutive short sequence motifs (nuclear localization signal) follow at residues 16–23 (YRKQIRKR), 52–59 (IRKLDMSK), and 71–78 (KKRQLEDT). Residues 83–410 (VKKRKEYDEK…PPSSFQDGQA (328 aa)) form a disordered region. 2 stretches are compositionally biased toward basic and acidic residues: residues 87 to 97 (KEYDEKKKEQG) and 114 to 126 (LTGE…EDSV). The span at 148-168 (SSIGLAISSDGASSSSAALSS) shows a compositional bias: low complexity. 3 stretches are compositionally biased toward pro residues: residues 198 to 207 (PLPPLPPLPP), 216 to 227 (SPFPPPPPGPPP), and 235 to 253 (PPLP…PPPG). 3 stretches are compositionally biased toward polar residues: residues 267-281 (SDFT…NITS), 300-312 (AESN…NANL), and 326-343 (QQHQ…TNFQ). 2 stretches are compositionally biased toward pro residues: residues 346-369 (VHPP…PPHP) and 378-403 (PRPP…PPPS).

In seedlings, mostly expressed in the shoot apical meristem (SAM) and root tip.

The protein localises to the nucleus. Functionally, involved in the regulation of flowering time in both long and short days. The protein is Protein EARLY FLOWERING 5 of Arabidopsis thaliana (Mouse-ear cress).